The sequence spans 56 residues: Mitoregulin (56 aa).

Residues 2 to 9 lie on the Mitochondrial matrix side of the membrane; the sequence is ADVSERTL. Residues 10–27 form a helical membrane-spanning segment; that stretch reads QVSVLVAFASGVVLGWQA. Over 28-56 the chain is Mitochondrial intermembrane; sequence NRLRRRYLDWRKRRLQDKLATTQKKLDLA.

This sequence belongs to the mitoregulin family. In terms of assembly, interacts with mitochondrial trifunctional enzyme, a heterotetrameric complex composed of 2 HADHA subunits and 2 HADHB subunits. Interacts with cytochrome b5 reductase CYB5R3; the interaction is required to maintain cellular lipid composition and leads to stimulation of mitochondrial respiratory complex I activity. Interacts with ATP synthase subunit ATP5F1B/ATP5B. In terms of tissue distribution, enriched in heart and skeletal muscle (at protein level). Also enriched in adipose tissue with lower levels detected in liver, pancreas and brain (at protein level). Higher levels in differentiated myotubes than in satellite cells.

It is found in the mitochondrion inner membrane. In terms of biological role, positively regulates mitochondrial complex assembly and/or stability. Increases mitochondrial membrane potential while decreasing mitochondrial reactive oxygen species. Increases mitochondrial respiration rate. Increased mitochondrial respiratory activity promotes myogenic differentiation which facilitates muscle growth and regeneration. Increases mitochondrial calcium retention capacity. Plays a role in maintenance of cellular lipid composition through its interaction with cytochrome b5 reductase CYB5R3 which is required for mitochondrial respiratory complex I activity. Interacts with the mitochondrial trifunctional enzyme complex (MTE) and enhances fatty acid beta-oxidation. Not required for MTE formation or stability. Modulates triglyceride clearance in adipocytes through its role in regulating fatty acid beta-oxidation and lipolysis. This is Mitoregulin from Mus musculus (Mouse).